A 455-amino-acid polypeptide reads, in one-letter code: UDP-N-acetylmuramate--L-alanine ligase (455 aa).

An ATP-binding site is contributed by 109–115; that stretch reads GTHGKTT.

Belongs to the MurCDEF family.

Its subcellular location is the cytoplasm. It carries out the reaction UDP-N-acetyl-alpha-D-muramate + L-alanine + ATP = UDP-N-acetyl-alpha-D-muramoyl-L-alanine + ADP + phosphate + H(+). It functions in the pathway cell wall biogenesis; peptidoglycan biosynthesis. Its function is as follows. Cell wall formation. The protein is UDP-N-acetylmuramate--L-alanine ligase of Caldicellulosiruptor saccharolyticus (strain ATCC 43494 / DSM 8903 / Tp8T 6331).